We begin with the raw amino-acid sequence, 207 residues long: Imidazole glycerol phosphate synthase subunit HisH (207 aa).

The Glutamine amidotransferase type-1 domain occupies 1–206 (MMIVIGYDAG…KEYVYENTAR (206 aa)). Cys79 functions as the Nucleophile in the catalytic mechanism. Active-site residues include His181 and Glu183.

Heterodimer of HisH and HisF.

The protein localises to the cytoplasm. It carries out the reaction 5-[(5-phospho-1-deoxy-D-ribulos-1-ylimino)methylamino]-1-(5-phospho-beta-D-ribosyl)imidazole-4-carboxamide + L-glutamine = D-erythro-1-(imidazol-4-yl)glycerol 3-phosphate + 5-amino-1-(5-phospho-beta-D-ribosyl)imidazole-4-carboxamide + L-glutamate + H(+). The catalysed reaction is L-glutamine + H2O = L-glutamate + NH4(+). It functions in the pathway amino-acid biosynthesis; L-histidine biosynthesis; L-histidine from 5-phospho-alpha-D-ribose 1-diphosphate: step 5/9. In terms of biological role, IGPS catalyzes the conversion of PRFAR and glutamine to IGP, AICAR and glutamate. The HisH subunit catalyzes the hydrolysis of glutamine to glutamate and ammonia as part of the synthesis of IGP and AICAR. The resulting ammonia molecule is channeled to the active site of HisF. This Streptococcus gordonii (strain Challis / ATCC 35105 / BCRC 15272 / CH1 / DL1 / V288) protein is Imidazole glycerol phosphate synthase subunit HisH.